Consider the following 354-residue polypeptide: Uroporphyrinogen decarboxylase (354 aa).

Substrate-binding positions include 27-31 (RQAGR), D77, Y154, T209, and H327.

Belongs to the uroporphyrinogen decarboxylase family. Homodimer.

Its subcellular location is the cytoplasm. The enzyme catalyses uroporphyrinogen III + 4 H(+) = coproporphyrinogen III + 4 CO2. The protein operates within porphyrin-containing compound metabolism; protoporphyrin-IX biosynthesis; coproporphyrinogen-III from 5-aminolevulinate: step 4/4. Its function is as follows. Catalyzes the decarboxylation of four acetate groups of uroporphyrinogen-III to yield coproporphyrinogen-III. This chain is Uroporphyrinogen decarboxylase, found in Pectobacterium atrosepticum (strain SCRI 1043 / ATCC BAA-672) (Erwinia carotovora subsp. atroseptica).